A 520-amino-acid polypeptide reads, in one-letter code: DNA-(apurinic or apyrimidinic site) endonuclease 2 (520 aa).

Residue E59 coordinates Mg(2+). Y181 is a catalytic residue. Mg(2+) is bound by residues D222, N224, and D353. D222 serves as the catalytic Proton donor/acceptor. Zn(2+)-binding residues include C476, H478, C500, and C514. A GRF-type zinc finger spans residues C476–V520.

Belongs to the DNA repair enzymes AP/ExoA family. The cofactor is Mg(2+). Mn(2+) serves as cofactor.

It is found in the nucleus. It catalyses the reaction Exonucleolytic cleavage in the 3'- to 5'-direction to yield nucleoside 5'-phosphates.. In terms of biological role, DNA repair enzyme that cleaves apurinic/apyrimidinic (AP) sites and removes 3'-blocking groups present at single strand breaks of damaged DNA. In Saccharomyces cerevisiae (strain ATCC 204508 / S288c) (Baker's yeast), this protein is DNA-(apurinic or apyrimidinic site) endonuclease 2 (APN2).